Here is a 192-residue protein sequence, read N- to C-terminus: Fe/S biogenesis protein NfuA (192 aa).

Cys149 and Cys152 together coordinate [4Fe-4S] cluster.

Belongs to the NfuA family. As to quaternary structure, homodimer. [4Fe-4S] cluster serves as cofactor.

In terms of biological role, involved in iron-sulfur cluster biogenesis. Binds a 4Fe-4S cluster, can transfer this cluster to apoproteins, and thereby intervenes in the maturation of Fe/S proteins. Could also act as a scaffold/chaperone for damaged Fe/S proteins. This is Fe/S biogenesis protein NfuA from Aeromonas hydrophila subsp. hydrophila (strain ATCC 7966 / DSM 30187 / BCRC 13018 / CCUG 14551 / JCM 1027 / KCTC 2358 / NCIMB 9240 / NCTC 8049).